Consider the following 438-residue polypeptide: uncharacterized protein (438 aa).

Disordered regions lie at residues 1 to 22 and 156 to 264; these read MRDN…TYDP and DTAK…PWRP. Over residues 156–170 the composition is skewed to basic and acidic residues; sequence DTAKSNEKLQGDESK. Residues 171–189 are compositionally biased toward low complexity; it reads SSNGSSSTSTTTQRGSTNS. Basic and acidic residues predominate over residues 191–206; it reads TKVKALKIEVKKKSDS.

The protein belongs to the adhesin P1 family.

This is an uncharacterized protein from Mycoplasma pneumoniae (strain ATCC 29342 / M129 / Subtype 1) (Mycoplasmoides pneumoniae).